A 461-amino-acid chain; its full sequence is Argininosuccinate lyase (461 aa).

It belongs to the lyase 1 family. Argininosuccinate lyase subfamily.

It localises to the cytoplasm. The catalysed reaction is 2-(N(omega)-L-arginino)succinate = fumarate + L-arginine. The protein operates within amino-acid biosynthesis; L-arginine biosynthesis; L-arginine from L-ornithine and carbamoyl phosphate: step 3/3. The sequence is that of Argininosuccinate lyase from Laribacter hongkongensis (strain HLHK9).